The following is an 807-amino-acid chain: Maternal DNA replication licensing factor mcm3 (807 aa).

Residues Ile295 to Leu502 enclose the MCM domain. Residue Gly345–Ser352 coordinates ATP. The Arginine finger signature appears at Ser477 to Asp480. A compositionally biased stretch (basic and acidic residues) spans Lys664 to Asn673. The interval Lys664 to Asn741 is disordered. Residues Phe707 to Arg723 are compositionally biased toward polar residues. Positions Lys727 to Asn741 are enriched in basic and acidic residues.

This sequence belongs to the MCM family. Component of the mcm2-7 complex (RLF-M). The complex forms a toroidal hexameric ring with the proposed subunit order mcm2-mcm6-mcm4-mcm7-mcm3-mcm5. The heterodimer of mmcm3/mcm5 interacts with mcm4, mmcm6, mcm7 and weakly with mcm2. Interacts with mcm7, though this interaction may not be direct, and remains in a complex with mcm7 throughout the cell cycle. Component of the CMG helicase complex, composed of the mcm2-7 complex, the GINS complex and cdc45.

Its subcellular location is the nucleus. It is found in the chromosome. The enzyme catalyses ATP + H2O = ADP + phosphate + H(+). Functionally, acts as a component of the mcm2-7 complex (mcm complex) which is the putative replicative helicase essential for 'once per cell cycle' DNA replication initiation and elongation in eukaryotic cells. The active ATPase sites in the mcm2-7 ring are formed through the interaction surfaces of two neighboring subunits such that a critical structure of a conserved arginine finger motif is provided in trans relative to the ATP-binding site of the Walker A box of the adjacent subunit. The six ATPase active sites, however, are likely to contribute differentially to the complex helicase activity. The existence of maternal and zygotic forms of mcm3 and mcm6 suggests that specific forms of mcm2-7 complexes may be used during different stages of development. This is Maternal DNA replication licensing factor mcm3 (mmcm3) from Xenopus laevis (African clawed frog).